Reading from the N-terminus, the 43-residue chain is Cuticle protein CP434 (43 aa).

Repeat copies occupy residues 1 to 18 (ALVGPSGMILADGTPVQF) and 25 to 42 (VLTGPSGIVFSNGQNIQL).

In terms of tissue distribution, calcified shell.

This chain is Cuticle protein CP434, found in Cancer pagurus (Rock crab).